The primary structure comprises 158 residues: Protein Smg homolog (158 aa).

This sequence belongs to the Smg family.

This is Protein Smg homolog from Coxiella burnetii (strain Dugway 5J108-111).